The primary structure comprises 887 residues: Endoglucanase 1 (887 aa).

The signal sequence occupies residues 1-55 (MRLVNSLGRRKILLILAVIVAFSTVLLFAKLWGRKTSSTLDEVGSKTHGDLTAEN). The tract at residues 40–66 (LDEVGSKTHGDLTAENKNGGYLPEEEI) is disordered. The span at 43–53 (VGSKTHGDLTA) shows a compositional bias: basic and acidic residues. The catalytic stretch occupies residues 56 to 518 (KNGGYLPEEE…AKMYKLYGGS (463 aa)). Asp131 serves as the catalytic Nucleophile. Residues 441–460 (ENPPKRPHHRTAHGSWADSQ) are disordered. Active-site residues include His448, Asp486, and Glu495. In terms of domain architecture, CBM3 1 spans 529-684 (VPEDEIFVEA…GVLVFGREPG (156 aa)). The tract at residues 684–730 (GSASKSTSKDNGLSKATPTVKTESQPTAKHTQNPASDFKTPANQNSV) is disordered. The span at 686–729 (ASKSTSKDNGLSKATPTVKTESQPTAKHTQNPASDFKTPANQNS) shows a compositional bias: polar residues. Residues 736–887 (IKGEVVLQYA…SNKLVYGKEP (152 aa)) form the CBM3 2 domain.

The protein belongs to the glycosyl hydrolase 9 (cellulase E) family.

It catalyses the reaction Endohydrolysis of (1-&gt;4)-beta-D-glucosidic linkages in cellulose, lichenin and cereal beta-D-glucans.. It functions in the pathway glycan metabolism; cellulose degradation. This enzyme catalyzes the endohydrolysis of 1,4-beta-glucosidic linkages in cellulose, lichenin and cereal beta-D-glucans. Principally active against barley beta-glucan. In Acetivibrio thermocellus (strain ATCC 27405 / DSM 1237 / JCM 9322 / NBRC 103400 / NCIMB 10682 / NRRL B-4536 / VPI 7372) (Clostridium thermocellum), this protein is Endoglucanase 1 (celI).